A 213-amino-acid chain; its full sequence is Large ribosomal subunit protein uL1 (213 aa).

Belongs to the universal ribosomal protein uL1 family. In terms of assembly, part of the 50S ribosomal subunit.

Its function is as follows. Binds directly to 23S rRNA. Probably involved in E site tRNA release. In terms of biological role, protein L1 is also a translational repressor protein, it controls the translation of its operon by binding to its mRNA. In Methanoculleus marisnigri (strain ATCC 35101 / DSM 1498 / JR1), this protein is Large ribosomal subunit protein uL1.